We begin with the raw amino-acid sequence, 100 residues long: uncharacterized protein (100 aa).

The region spanning 1 to 100 (MEPIEVFKAL…KLADFLKTEI (100 aa)) is the HTH arsR-type domain. Residues 44–67 (VSQITDKLKMTQSTASQYLTILLR) constitute a DNA-binding region (H-T-H motif).

This is an uncharacterized protein from Bacillus subtilis (strain 168).